We begin with the raw amino-acid sequence, 197 residues long: MKTPDTCIQLIVGLGNPGNEYEHTRHNAGQDFVEELARDLGQPLSPTPKFFGHFSRLNINGKDVRLLVPTTYMNRSGQAVAAVCQFYKIPPEAVLVVHDELDLPPGKARLKIGGGHGGHNGLRDIISSLGNNKDFGRLRLGIGHPGNAKLVSNYVLKKAPSEEFNAIEDAIRAAQPHVADLAKGDWEKAMRELHSKT.

Tyr-21 is a tRNA binding site. The Proton acceptor role is filled by His-26. Residues Tyr-72, Asn-74, and Asn-120 each contribute to the tRNA site.

The protein belongs to the PTH family. In terms of assembly, monomer.

It is found in the cytoplasm. The catalysed reaction is an N-acyl-L-alpha-aminoacyl-tRNA + H2O = an N-acyl-L-amino acid + a tRNA + H(+). In terms of biological role, hydrolyzes ribosome-free peptidyl-tRNAs (with 1 or more amino acids incorporated), which drop off the ribosome during protein synthesis, or as a result of ribosome stalling. Functionally, catalyzes the release of premature peptidyl moieties from peptidyl-tRNA molecules trapped in stalled 50S ribosomal subunits, and thus maintains levels of free tRNAs and 50S ribosomes. The protein is Peptidyl-tRNA hydrolase of Saccharophagus degradans (strain 2-40 / ATCC 43961 / DSM 17024).